A 230-amino-acid chain; its full sequence is Protein GrpE (230 aa).

2 disordered regions span residues 1 to 28 (MADEKNKPENPDLDQRDINNPRDREALK) and 209 to 230 (GVSKGGPKVSAENGASTSEDNA). Residues 221–230 (NGASTSEDNA) show a composition bias toward polar residues.

This sequence belongs to the GrpE family. In terms of assembly, homodimer.

The protein localises to the cytoplasm. In terms of biological role, participates actively in the response to hyperosmotic and heat shock by preventing the aggregation of stress-denatured proteins, in association with DnaK and GrpE. It is the nucleotide exchange factor for DnaK and may function as a thermosensor. Unfolded proteins bind initially to DnaJ; upon interaction with the DnaJ-bound protein, DnaK hydrolyzes its bound ATP, resulting in the formation of a stable complex. GrpE releases ADP from DnaK; ATP binding to DnaK triggers the release of the substrate protein, thus completing the reaction cycle. Several rounds of ATP-dependent interactions between DnaJ, DnaK and GrpE are required for fully efficient folding. The chain is Protein GrpE from Brucella ovis (strain ATCC 25840 / 63/290 / NCTC 10512).